We begin with the raw amino-acid sequence, 608 residues long: 1-phosphatidylinositol 4,5-bisphosphate phosphodiesterase zeta-1 (608 aa).

Residues 35–70 (CSYIHVKQIFKDNDRLKQGRITIEEFRAIYRIITHR) form the EF-hand domain. Positions 155–299 (QDMTHPLNDY…LKFKILVKNK (145 aa)) constitute a PI-PLC X-box domain. Residues histidine 170 and histidine 215 contribute to the active site. The interval 305–324 (KETHERKGSDKRGDNQDKET) is disordered. One can recognise a PI-PLC Y-box domain in the interval 349–465 (LSDLVIYTKA…GYILKPHFLR (117 aa)). A C2 domain is found at 465-589 (RESKSYFNPS…KGYRRIPLFS (125 aa)).

In terms of assembly, interacts via its C2 domain with PtdIns(3)P and, to a lesser extent, PtdIns(5)P in vitro. Ca(2+) serves as cofactor. Expressed specifically in testis and sperm. Weakly expressed in pancreatic-duct cells. Up-regulated in pancreatic-duct cells from patients with cystic fibrosis.

It localises to the nucleus. The protein resides in the cytoplasm. The protein localises to the perinuclear region. The enzyme catalyses a 1,2-diacyl-sn-glycero-3-phospho-(1D-myo-inositol-4,5-bisphosphate) + H2O = 1D-myo-inositol 1,4,5-trisphosphate + a 1,2-diacyl-sn-glycerol + H(+). Its function is as follows. The production of the second messenger molecules diacylglycerol (DAG) and inositol 1,4,5-trisphosphate (IP3) is mediated by activated phosphatidylinositol-specific phospholipase C enzymes. In vitro, hydrolyzes PtdIns(4,5)P2 in a Ca(2+)-dependent manner. Triggers intracellular Ca(2+) oscillations in oocytes solely during M phase and is involved in inducing oocyte activation and initiating embryonic development up to the blastocyst stage. Is therefore a strong candidate for the egg-activating soluble sperm factor that is transferred from the sperm into the egg cytoplasm following gamete membrane fusion. May exert an inhibitory effect on phospholipase-C-coupled processes that depend on calcium ions and protein kinase C, including CFTR trafficking and function. This is 1-phosphatidylinositol 4,5-bisphosphate phosphodiesterase zeta-1 from Homo sapiens (Human).